We begin with the raw amino-acid sequence, 92 residues long: Small ribosomal subunit protein uS17 (92 aa).

Belongs to the universal ribosomal protein uS17 family. In terms of assembly, part of the 30S ribosomal subunit.

Functionally, one of the primary rRNA binding proteins, it binds specifically to the 5'-end of 16S ribosomal RNA. This Corynebacterium diphtheriae (strain ATCC 700971 / NCTC 13129 / Biotype gravis) protein is Small ribosomal subunit protein uS17.